The sequence spans 442 residues: U11/U12 small nuclear ribonucleoprotein 65 kDa protein (442 aa).

The region spanning 28 to 102 (VTLLVRHLPD…KVLQVQRANK (75 aa)) is the RRM 1 domain. 3 disordered regions span residues 101 to 138 (NKPN…QILS), 200 to 242 (LALP…GRKR), and 290 to 317 (SKVT…DSNL). A compositionally biased stretch (basic and acidic residues) spans 102–116 (KPNDNKKSRQIEESV). The segment covering 117–136 (TKGNAFSTVSTNNDSKSGQI) has biased composition (polar residues). Residues 200-209 (LALPTPPLPK) show a composition bias toward pro residues. Residues 297-307 (YKEESENEDPA) show a composition bias toward acidic residues. An RRM 2 domain is found at 352–434 (VVLYIKNLAK…KPMIIQFGRT (83 aa)).

In terms of assembly, component of the U11/U12 snRNPs that are part of the U12-type spliceosome. Forms a complex with U12 snRNA. In terms of tissue distribution, ubiquitous.

It localises to the nucleus. Component of minor spliceosome required for U12-type intron splicing and alternative splicing of many introns. Binds specifically to U12 snRNA, which is necessary for branch-point site recognition. Required for normal plant development. The protein is U11/U12 small nuclear ribonucleoprotein 65 kDa protein (SNRNP65) of Arabidopsis thaliana (Mouse-ear cress).